Here is a 493-residue protein sequence, read N- to C-terminus: Dipeptide permease D (493 aa).

13 helical membrane passes run Val-14–Leu-34, Glu-49–Ala-69, Leu-91–Val-111, Gly-138–Cys-158, Trp-167–Cys-187, Asn-212–Trp-232, Trp-235–Tyr-255, Leu-267–Gly-287, Met-312–Val-332, Ile-344–Leu-364, Leu-379–Met-399, Val-413–Ile-433, and Val-458–Leu-478.

This sequence belongs to the major facilitator superfamily. Proton-dependent oligopeptide transporter (POT/PTR) (TC 2.A.17) family. DtpD subfamily.

It is found in the cell inner membrane. Its function is as follows. Probable proton-dependent permease that transports dipeptides. The chain is Dipeptide permease D from Salmonella choleraesuis (strain SC-B67).